The chain runs to 497 residues: Probable cytosol aminopeptidase (497 aa).

Positions 263 and 268 each coordinate Mn(2+). Lysine 275 is a catalytic residue. Positions 286, 345, and 347 each coordinate Mn(2+). Residue arginine 349 is part of the active site.

This sequence belongs to the peptidase M17 family. Mn(2+) is required as a cofactor.

It localises to the cytoplasm. The enzyme catalyses Release of an N-terminal amino acid, Xaa-|-Yaa-, in which Xaa is preferably Leu, but may be other amino acids including Pro although not Arg or Lys, and Yaa may be Pro. Amino acid amides and methyl esters are also readily hydrolyzed, but rates on arylamides are exceedingly low.. It carries out the reaction Release of an N-terminal amino acid, preferentially leucine, but not glutamic or aspartic acids.. Functionally, presumably involved in the processing and regular turnover of intracellular proteins. Catalyzes the removal of unsubstituted N-terminal amino acids from various peptides. This chain is Probable cytosol aminopeptidase, found in Allorhizobium ampelinum (strain ATCC BAA-846 / DSM 112012 / S4) (Agrobacterium vitis (strain S4)).